Reading from the N-terminus, the 295-residue chain is Peptide transport system permease protein SapC (295 aa).

The next 6 helical transmembrane spans lie at 27–47, 102–122, 129–149, 157–177, 219–239, and 262–282; these read IALF…FASY, LLVV…AGLL, FVGH…AVVI, LWNA…HTIY, VARA…ISLG, and PWTV…SIIF. In terms of domain architecture, ABC transmembrane type-1 spans 98-278; it reads LGSALLVVFS…GFAIIFTILL (181 aa).

It belongs to the binding-protein-dependent transport system permease family. OppBC subfamily.

It localises to the cell inner membrane. Involved in a peptide intake transport system that plays a role in the resistance to antimicrobial peptides. The chain is Peptide transport system permease protein SapC (sapC) from Haemophilus influenzae (strain ATCC 51907 / DSM 11121 / KW20 / Rd).